The sequence spans 532 residues: Vesicular acetylcholine transporter unc-17 (532 aa).

Residues 1–31 (MGFNVPVINRDSEILKADAKKWLEQQDNQKK) are Cytoplasmic-facing. The chain crosses the membrane as a helical span at residues 32 to 52 (CVLVIVSIALLLDNMLYMVIV). Residues 53–101 (PIIPKYLRDIHNYQVTFEGYHNETSQLANGTYLVREVGGRINFLDEELE) are Lumenal, vesicle-facing. N-linked (GlcNAc...) asparagine glycosylation is found at Asn74 and Asn81. Residues 102 to 121 (LGWLFASKALLQIFVNPFSG) traverse the membrane as a helical segment. The Cytoplasmic portion of the chain corresponds to 122 to 130 (YIIDRVGYE). A helical transmembrane segment spans residues 131–151 (IPMILGLCTMFFSTAIFALGK). The Lumenal, vesicle portion of the chain corresponds to 152 to 160 (SYGVLLFAR). The chain crosses the membrane as a helical span at residues 161-180 (SLQGFGSAFADTSGLAMIAD). Residues 181–191 (RFTEENERSAA) are Cytoplasmic-facing. The helical transmembrane segment at 192 to 213 (LGIALAFISFGCLVAPPFGSVL) threads the bilayer. Residues 214–219 (YSLAGK) are Lumenal, vesicle-facing. The helical transmembrane segment at 220–242 (PVPFLILSFVCLADAIAVFMVIN) threads the bilayer. The Cytoplasmic segment spans residues 243–266 (PHRRGTDSHGEKVQGTPMWRLFMD). The helical transmembrane segment at 267–286 (PFIACCSGALIMANVSLAFL) threads the bilayer. At 287 to 303 (EPTITTWMSEMMPDTPG) the chain is on the lumenal, vesicle side. A helical membrane pass occupies residues 304 to 328 (WLVGVIWLPPFFPHVLGVYVTVKML). Residues 329-335 (RAFPHHT) are Cytoplasmic-facing. Residues 336 to 356 (WAIAMVGLAMEGIACFAIPYT) traverse the membrane as a helical segment. Residues 357 to 367 (TSVMQLVIPLS) are Lumenal, vesicle-facing. A helical transmembrane segment spans residues 368–388 (FVCFGIALIDTSLLPMLGHLV). The Cytoplasmic segment spans residues 389-393 (DTRHV). Residues 394-412 (SVYGSVYAIADISYSLAYA) form a helical membrane-spanning segment. Residues 413 to 418 (FGPIIA) lie on the Lumenal, vesicle side of the membrane. The chain crosses the membrane as a helical span at residues 419 to 440 (GWIVTNWGFTALNIIIFATNVT). The Cytoplasmic segment spans residues 441-532 (YAPVLFLLRK…AGYDPLNPQW (92 aa)).

The protein belongs to the major facilitator superfamily. Vesicular transporter family. As to expression, detected in most regions of the nervous system including the nerve ring, the ventral and dorsal nerve cords, and the pharyngeal nervous system. Expressed in most cholinergic neurons. In addition, expressed in SIA, SIB and SMB sublateral motor neurons.

The protein resides in the cytoplasmic vesicle. The protein localises to the secretory vesicle. It is found in the synaptic vesicle membrane. Involved in acetylcholine transport into synaptic vesicles. This chain is Vesicular acetylcholine transporter unc-17, found in Caenorhabditis elegans.